Consider the following 227-residue polypeptide: MRVAGAAKLVVAVAVFLLTFYVISQVFEIKMDASLGNLFARSALDTAARSTKPPRYKCGISKACPEKHFAFKMASGAANVVGPKICLEDNVLMSGVKNNVGRGINVALANGKTGEVLDTKYFDMWGGDVAPFIEFLKAIQDGTIVLMGTYDDGATKLNDEARRLIADLGSTSITNLGFRDNWVFCGGKGIKTKSPFEQHIKNNKDTNKYEGWPEVVEMEGCIPQKQD.

Residues 1–24 (MRVAGAAKLVVAVAVFLLTFYVIS) form the signal peptide. Cystine bridges form between C58–C86 and C64–C221. Residues 67–225 (KHFAFKMASG…VEMEGCIPQK (159 aa)) enclose the GG-type lectin domain.

Belongs to the FAM3 family. Present in most secretory epithelia (at protein level).

Its subcellular location is the secreted. It is found in the cytoplasmic vesicle. In terms of biological role, may be involved in retinal laminar formation. Promotes epithelial to mesenchymal transition. This is Protein FAM3C (FAM3C) from Homo sapiens (Human).